The sequence spans 195 residues: Peptidyl-tRNA hydrolase (195 aa).

Residue tyrosine 17 participates in tRNA binding. Histidine 22 acts as the Proton acceptor in catalysis. 3 residues coordinate tRNA: phenylalanine 68, asparagine 70, and asparagine 116.

It belongs to the PTH family. As to quaternary structure, monomer.

The protein localises to the cytoplasm. The enzyme catalyses an N-acyl-L-alpha-aminoacyl-tRNA + H2O = an N-acyl-L-amino acid + a tRNA + H(+). Functionally, hydrolyzes ribosome-free peptidyl-tRNAs (with 1 or more amino acids incorporated), which drop off the ribosome during protein synthesis, or as a result of ribosome stalling. Catalyzes the release of premature peptidyl moieties from peptidyl-tRNA molecules trapped in stalled 50S ribosomal subunits, and thus maintains levels of free tRNAs and 50S ribosomes. The sequence is that of Peptidyl-tRNA hydrolase from Shewanella amazonensis (strain ATCC BAA-1098 / SB2B).